A 336-amino-acid polypeptide reads, in one-letter code: uncharacterized protein (336 aa).

The segment at 196 to 222 is disordered; sequence YKEGDDSNWDDFGSESEDDSKEAHSEE. The segment covering 201 to 215 has biased composition (acidic residues); it reads DSNWDDFGSESEDDS. At Ser-211 the chain carries Phosphoserine.

This is an uncharacterized protein from Schizosaccharomyces pombe (strain 972 / ATCC 24843) (Fission yeast).